Consider the following 417-residue polypeptide: COP9 signalosome complex subunit 7a (417 aa).

The PCI domain occupies 2–179 (EQTKALNALE…EMVQINSVAA (178 aa)). Residues 240 to 417 (DEQKGAVPSS…KRGSKRKLTA (178 aa)) form a disordered region. The segment covering 263–290 (RGGGGGGDGAGAGGSFRGSGYSRGGGLS) has biased composition (gly residues). 3 stretches are compositionally biased toward low complexity: residues 291–311 (QGYR…SRQQ), 320–330 (SNQSGTNSLLT), and 343–352 (PSAVSPSAAA). A compositionally biased stretch (gly residues) spans 367–379 (METGSGSGSGPLG). Acidic residues predominate over residues 385-405 (DMDDSEEDIDDDTMDLDDEGD).

The protein belongs to the CSN7/EIF3M family. CSN7 subfamily. As to quaternary structure, component of the COP9 signalosome (CSN) complex.

The protein resides in the cytoplasm. Its subcellular location is the nucleus. Its function is as follows. Component of the COP9 signalosome (CSN) complex that acts as an regulator of the ubiquitin (Ubl) conjugation pathway by mediating the deneddylation of the cullin subunit of SCF-type E3 ubiquitin-protein ligase complexes. The CSN complex is involved in the regulation of the circadian clock through its control of the stability of the SCF(FWD1) complex. The sequence is that of COP9 signalosome complex subunit 7a (csn-7a) from Neurospora crassa (strain ATCC 24698 / 74-OR23-1A / CBS 708.71 / DSM 1257 / FGSC 987).